A 101-amino-acid polypeptide reads, in one-letter code: Putative monooxygenase Rv0793 (101 aa).

The 89-residue stretch at 5 to 93 (VAVIARFMPR…LTRPVAVTVL (89 aa)) folds into the ABM domain.

In terms of assembly, homodimer.

Putative monooygenase that might be involved in antibiotic biosynthesis, or may act as reactive oxygen species scavenger that could help in evading host defenses. The polypeptide is Putative monooxygenase Rv0793 (Mycobacterium tuberculosis (strain ATCC 25618 / H37Rv)).